The sequence spans 197 residues: Putative phosphopantothenoylcysteine decarboxylase (197 aa).

FMN-binding positions include Phe52 and 102–105; that span reads SANT. Substrate is bound at residue Asn139. The Proton donor role is filled by Cys174.

It belongs to the HFCD (homooligomeric flavin containing Cys decarboxylase) superfamily. In terms of assembly, homotrimer. Requires FMN as cofactor.

It catalyses the reaction N-[(R)-4-phosphopantothenoyl]-L-cysteine + H(+) = (R)-4'-phosphopantetheine + CO2. The protein operates within cofactor biosynthesis; coenzyme A biosynthesis; CoA from (R)-pantothenate: step 3/5. Functionally, necessary for the biosynthesis of coenzyme A. Catalyzes the decarboxylation of 4-phosphopantothenoylcysteine to form 4'-phosphopantotheine. The protein is Putative phosphopantothenoylcysteine decarboxylase (ppcdc) of Dictyostelium discoideum (Social amoeba).